The following is a 151-amino-acid chain: Type 4 adapter protein IcmW (151 aa).

In terms of assembly, the T4BSS is a complex nanomachine composed of several subcomplexes. This subunit is part of the Type IV Coupling Complex (T4CC), a subcomplex composed of the DotLMNYZ core and the IcmSW-LvgA adapter subunits, linked by the C-terminal tail of DotL. Interacts with IcmS. IcmS and IcmW form a stable complex. Interaction with IcmS greatly enhances the stability of IcmW. Interacts directly with the type 4 coupling protein DotL. Interacts with LvgA. Interacts with effector proteins.

It localises to the cytoplasm. Interaction with DotL is critical for the export of IcmSW-dependent substrates. Component of the Dot/Icm type IVB secretion system (T4BSS), which is used to inject bacterial effector proteins into eukaryotic host cells. Part of a subcomplex which recruits effector proteins and delivers them to the core transmembrane subcomplex. The IcmS/IcmW protein complex plays an important role in protein translocation by interacting with multiple Dot/Icm effector proteins to facilitate their translocation into host cells. Interaction promotes conformational changes in the effector protein, which may facilitate display of a C-terminal translocation signal. May maintain the substrates in a translocation competent form. Required for intracellular growth in host cells, replicative phagosome formation and phagosome trafficking. The protein is Type 4 adapter protein IcmW of Legionella pneumophila subsp. pneumophila (strain Philadelphia 1 / ATCC 33152 / DSM 7513).